Reading from the N-terminus, the 209-residue chain is Large ribosomal subunit protein uL3 (209 aa).

Positions 132 to 153 (ATHGNSLSHRVPGSIGQNQTPG) are disordered. Gln-150 carries the N5-methylglutamine modification.

Belongs to the universal ribosomal protein uL3 family. Part of the 50S ribosomal subunit. Forms a cluster with proteins L14 and L19. Methylated by PrmB.

Functionally, one of the primary rRNA binding proteins, it binds directly near the 3'-end of the 23S rRNA, where it nucleates assembly of the 50S subunit. The polypeptide is Large ribosomal subunit protein uL3 (Enterobacter sp. (strain 638)).